A 574-amino-acid polypeptide reads, in one-letter code: Galactose transporter (574 aa).

A disordered region spans residues 1–57 (MAVEENNMPVVSQQPQAGEDVISSLSKDSHLSAQSQKYSNDELKAGESGSEGSQSVP). At 1 to 70 (MAVEENNMPV…PKKPMSEYVT (70 aa)) the chain is on the cytoplasmic side. Residues 23–38 (SSLSKDSHLSAQSQKY) show a composition bias toward polar residues. Phosphoserine is present on residues Ser-32, Ser-35, Ser-39, Ser-48, Ser-50, Ser-53, and Ser-55. The helical transmembrane segment at 71-91 (VSLLCLCVAFGGFMFGWDTGT) threads the bilayer. The Extracellular segment spans residues 92-121 (ISGFVVQTDFLRRFGMKHKDGTHYLSNVRT). Residues 122-142 (GLIVAIFNIGCAFGGIILSKG) traverse the membrane as a helical segment. Topologically, residues 143–149 (GDMYGRK) are cytoplasmic. Residues 150–170 (KGLSIVVSVYIVGIIIQIASI) traverse the membrane as a helical segment. Topologically, residues 171–175 (NKWYQ) are extracellular. The chain crosses the membrane as a helical span at residues 176–196 (YFIGRIISGLGVGGIAVLCPM). The Cytoplasmic segment spans residues 197-207 (LISEIAPKHLR). Residues 208–228 (GTLVSCYQLMITAGIFLGYCT) form a helical membrane-spanning segment. Residues 229 to 242 (NYGTKSYSNSVQWR) lie on the Extracellular side of the membrane. The helical transmembrane segment at 243-263 (VPLGLCFAWSLFMIGALTLVP) threads the bilayer. Residues 264 to 342 (ESPRYLCEVN…MGVFVQMFQQ (79 aa)) are Cytoplasmic-facing. The chain crosses the membrane as a helical span at residues 343–362 (LTGNNYFFYYGTVIFKSVGL). The Extracellular portion of the chain corresponds to 363–366 (DDSF). The chain crosses the membrane as a helical span at residues 367-387 (ETSIVIGVVNFASTFFSLWTV). The Cytoplasmic portion of the chain corresponds to 388–394 (ENLGHRK). A helical transmembrane segment spans residues 395-415 (CLLLGAATMMACMVIYASVGV). Topologically, residues 416–435 (TRLYPHGKSQPSSKGAGNCM) are extracellular. A helical transmembrane segment spans residues 436–456 (IVFTCFYIFCYATTWAPVAWV). At 457-472 (ITAESFPLRVKSKCMA) the chain is on the cytoplasmic side. The chain crosses the membrane as a helical span at residues 473 to 493 (LASASNWVWGFLIAFFTPFIT). At 494–499 (SAINFY) the chain is on the extracellular side. Residues 500–520 (YGYVFMGCLVAMFFYVFFFVP) traverse the membrane as a helical segment. The Cytoplasmic portion of the chain corresponds to 521–574 (ETKGLSLEEIQELWEEGVLPWKSEGWIPSSRRGNNYDLEDLQHDDKPWYKAMLE).

It belongs to the major facilitator superfamily. Sugar transporter (TC 2.A.1.1) family.

It is found in the membrane. Its function is as follows. GAL2 is a facilitated diffusion transporter required for both the high-affinity galactokinase-dependent and low-affinity galactokinase-independent galactose transport processes. The protein is Galactose transporter (GAL2) of Saccharomyces cerevisiae (strain ATCC 204508 / S288c) (Baker's yeast).